A 508-amino-acid chain; its full sequence is Maturase K (508 aa).

This sequence belongs to the intron maturase 2 family. MatK subfamily.

Its subcellular location is the plastid. The protein localises to the chloroplast. Usually encoded in the trnK tRNA gene intron. Probably assists in splicing its own and other chloroplast group II introns. The protein is Maturase K of Manilkara zapota (Sapodilla plum).